The following is a 258-amino-acid chain: Small ribosomal subunit protein uS2 (258 aa).

Belongs to the universal ribosomal protein uS2 family.

In Streptococcus suis (strain 98HAH33), this protein is Small ribosomal subunit protein uS2.